A 317-amino-acid polypeptide reads, in one-letter code: Dehydrogenase/reductase SDR family member 12 (317 aa).

Residues S50 and I52 each coordinate NAD(+). Residue S175 coordinates substrate. 3 residues coordinate NAD(+): Y201, K205, and T234. Y201 functions as the Proton acceptor in the catalytic mechanism.

Belongs to the short-chain dehydrogenases/reductases (SDR) family.

Functionally, putative oxidoreductase. The sequence is that of Dehydrogenase/reductase SDR family member 12 from Homo sapiens (Human).